Consider the following 132-residue polypeptide: HLA class I histocompatibility antigen protein P5 (132 aa).

Expressed in lymphoid tissues; Detected in spleen as well as in B-cell lines, NK cell lines and activated lymphocytes.

The protein is HLA class I histocompatibility antigen protein P5 (HCP5) of Homo sapiens (Human).